An 81-amino-acid chain; its full sequence is Exodeoxyribonuclease 7 small subunit (81 aa).

The protein belongs to the XseB family. As to quaternary structure, heterooligomer composed of large and small subunits.

The protein localises to the cytoplasm. It catalyses the reaction Exonucleolytic cleavage in either 5'- to 3'- or 3'- to 5'-direction to yield nucleoside 5'-phosphates.. In terms of biological role, bidirectionally degrades single-stranded DNA into large acid-insoluble oligonucleotides, which are then degraded further into small acid-soluble oligonucleotides. The protein is Exodeoxyribonuclease 7 small subunit of Nitratidesulfovibrio vulgaris (strain ATCC 29579 / DSM 644 / CCUG 34227 / NCIMB 8303 / VKM B-1760 / Hildenborough) (Desulfovibrio vulgaris).